We begin with the raw amino-acid sequence, 227 residues long: Ribose-5-phosphate isomerase A (227 aa).

Substrate is bound by residues 26–29, 82–85, and 95–98; these read TGST, DGAD, and KGGG. Glutamate 104 (proton acceptor) is an active-site residue. Residue lysine 122 participates in substrate binding.

The protein belongs to the ribose 5-phosphate isomerase family. Homodimer.

The catalysed reaction is aldehydo-D-ribose 5-phosphate = D-ribulose 5-phosphate. It participates in carbohydrate degradation; pentose phosphate pathway; D-ribose 5-phosphate from D-ribulose 5-phosphate (non-oxidative stage): step 1/1. Functionally, catalyzes the reversible conversion of ribose-5-phosphate to ribulose 5-phosphate. This Streptococcus equi subsp. zooepidemicus (strain MGCS10565) protein is Ribose-5-phosphate isomerase A.